Reading from the N-terminus, the 414-residue chain is Serine hydroxymethyltransferase (414 aa).

(6S)-5,6,7,8-tetrahydrofolate-binding positions include L116 and 120–122; that span reads GHL. Residue K225 is modified to N6-(pyridoxal phosphate)lysine. 349–351 contributes to the (6S)-5,6,7,8-tetrahydrofolate binding site; the sequence is SPF.

Belongs to the SHMT family. As to quaternary structure, homodimer. It depends on pyridoxal 5'-phosphate as a cofactor.

It localises to the cytoplasm. It carries out the reaction (6R)-5,10-methylene-5,6,7,8-tetrahydrofolate + glycine + H2O = (6S)-5,6,7,8-tetrahydrofolate + L-serine. The protein operates within one-carbon metabolism; tetrahydrofolate interconversion. It participates in amino-acid biosynthesis; glycine biosynthesis; glycine from L-serine: step 1/1. Its function is as follows. Catalyzes the reversible interconversion of serine and glycine with tetrahydrofolate (THF) serving as the one-carbon carrier. This reaction serves as the major source of one-carbon groups required for the biosynthesis of purines, thymidylate, methionine, and other important biomolecules. Also exhibits THF-independent aldolase activity toward beta-hydroxyamino acids, producing glycine and aldehydes, via a retro-aldol mechanism. The polypeptide is Serine hydroxymethyltransferase (Oenococcus oeni (strain ATCC BAA-331 / PSU-1)).